Consider the following 463-residue polypeptide: Cobyrinate a,c-diamide synthase (463 aa).

Residues 252-448 (RIAIARDEAF…LHLHFGTNPD (197 aa)) form the GATase cobBQ-type domain. Cys335 functions as the Nucleophile in the catalytic mechanism.

Belongs to the CobB/CbiA family. It depends on Mg(2+) as a cofactor.

The enzyme catalyses cob(II)yrinate + 2 L-glutamine + 2 ATP + 2 H2O = cob(II)yrinate a,c diamide + 2 L-glutamate + 2 ADP + 2 phosphate + 2 H(+). Catalyzes the ATP-dependent amidation of the two carboxylate groups at positions a and c of cobyrinate, using either L-glutamine or ammonia as the nitrogen source. The protein is Cobyrinate a,c-diamide synthase (cbiA) of Dehalococcoides mccartyi (strain ATCC BAA-2266 / KCTC 15142 / 195) (Dehalococcoides ethenogenes (strain 195)).